The chain runs to 221 residues: Mitochondrial cardiolipin hydrolase (221 aa).

Topologically, residues 1-4 are mitochondrial intermembrane; that stretch reads MGRS. A required for mitochondrial localization region spans residues 1–38; it reads MGRSSWRLVFAAGAGLALALEALPWLMRWLLAGRRPRR. Residues 5 to 27 traverse the membrane as a helical segment; sequence SWRLVFAAGAGLALALEALPWLM. Over 28 to 221 the chain is Cytoplasmic; sequence RWLLAGRRPR…SFFPQKHRGH (194 aa). Residues 44-75 form a C3H1-type; atypical zinc finger; sequence PSQVTCTEALLQAPGLPPGPSGCPCSLPHSES. In terms of domain architecture, PLD phosphodiesterase spans 148–175; that stretch reads DLGYMHHKFAIVDKKVLITGSLNWTTQA. Active-site residues include His-153, Lys-155, and Asp-160.

This sequence belongs to the phospholipase D family. MitoPLD/Zucchini subfamily. As to quaternary structure, homodimer. Interacts with MOV10L1. Interacts with MIGA1 and MIGA2; possibly facilitating homodimer formation. Interacts with GK2. In terms of tissue distribution, predominantly expressed in testis (at protein level) and in growing ovary. Also expressed in the brain, eye and urinary bladder (at protein level), but its levels were low or undetectable in other organs.

It localises to the mitochondrion outer membrane. It is found in the nucleus membrane. The protein resides in the cell membrane. Its subcellular location is the golgi apparatus. It catalyses the reaction a cardiolipin + H2O = a 1,2-diacyl-sn-glycero-3-phospho-(1'-sn-glycerol) + a 1,2-diacyl-sn-glycero-3-phosphate + H(+). Its activity is regulated as follows. Single stranded DNA (ssDNA) hydrolase activity does not depend upon, but is stimulated by the presence of Ca(2+) and Mn(2+). MIGA1 and MIGA2 increase PLD6 self-association affinity and affects the homodimer conformation facilitating its phospholipase activity over the nuclease activity. MYC induces its expression and stimulates its phospholipase activity. Functionally, presents phospholipase and nuclease activities, depending on the different physiological conditions. Interaction with Mitoguardin (MIGA1 or MIGA2) affects the dimer conformation, facilitating the lipase activity over the nuclease activity. Plays a key role in mitochondrial fusion and fission via its phospholipase activity. In its phospholipase role, it uses the mitochondrial lipid cardiolipin as substrate to generate phosphatidate (PA or 1,2-diacyl-sn-glycero-3-phosphate), a second messenger signaling lipid. Production of PA facilitates Mitofusin-mediated fusion, whereas the cleavage of PA by the Lipin family of phosphatases produces diacylgycerol (DAG) which promotes mitochondrial fission. Both Lipin and DAG regulate mitochondrial dynamics and membrane fusion/fission, important processes for adapting mitochondrial metabolism to changes in cell physiology. Mitochondrial fusion enables cells to cope with the increased nucleotide demand during DNA synthesis. Mitochondrial function and dynamics are closely associated with biological processes such as cell growth, proliferation, and differentiation. Mediator of MYC activity, promotes mitochondrial fusion and activates AMPK which in turn inhibits YAP/TAZ, thereby inducing cell growth and proliferation. The endonuclease activity plays a critical role in PIWI-interacting RNA (piRNA) biogenesis during spermatogenesis. Implicated in spermatogenesis and sperm fertility in testicular germ cells, its single strand-specific nuclease activity is critical for the biogenesis/maturation of PIWI-interacting RNA (piRNA). MOV10L1 selectively binds to piRNA precursors and funnels them to the endonuclease that catalyzes the first cleavage step of piRNA processing to generate piRNA intermediate fragments that are subsequently loaded to Piwi proteins. Cleaves either DNA or RNA substrates with similar affinity, producing a 5' phosphate end, in this way it participates in the processing of primary piRNA transcripts. piRNAs provide essential protection against the activity of mobile genetic elements. piRNA-mediated transposon silencing is thus critical for maintaining genome stability, in particular in germline cells when transposons are mobilized as a consequence of wide-spread genomic demethylation. PA may act as signaling molecule in the recognition/transport of the precursor RNAs of primary piRNAs. Interacts with tesmin in testes, suggesting a role in spermatogenesis via association with its interacting partner. This chain is Mitochondrial cardiolipin hydrolase (Pld6), found in Mus musculus (Mouse).